Reading from the N-terminus, the 192-residue chain is UPF0312 protein PC1_2518 (192 aa).

A signal peptide spans 1–23 (MLKKTLLSLTAVSMLASAGSALA).

Belongs to the UPF0312 family. Type 1 subfamily.

The protein localises to the periplasm. This chain is UPF0312 protein PC1_2518, found in Pectobacterium carotovorum subsp. carotovorum (strain PC1).